The primary structure comprises 334 residues: Ferredoxin--NADP reductase (334 aa).

The FAD site is built by Asp-33, Gln-41, Tyr-46, Ala-86, Phe-120, Asp-286, and Thr-327.

Belongs to the ferredoxin--NADP reductase type 2 family. In terms of assembly, homodimer. The cofactor is FAD.

It carries out the reaction 2 reduced [2Fe-2S]-[ferredoxin] + NADP(+) + H(+) = 2 oxidized [2Fe-2S]-[ferredoxin] + NADPH. The protein is Ferredoxin--NADP reductase of Rickettsia prowazekii (strain Madrid E).